The following is a 199-amino-acid chain: Dephospho-CoA kinase (199 aa).

The 196-residue stretch at 4-199 (VIGLTGGIAS…DNVLQKWNIS (196 aa)) folds into the DPCK domain. Position 12–17 (12–17 (ASGKST)) interacts with ATP.

The protein belongs to the CoaE family.

It is found in the cytoplasm. The enzyme catalyses 3'-dephospho-CoA + ATP = ADP + CoA + H(+). It functions in the pathway cofactor biosynthesis; coenzyme A biosynthesis; CoA from (R)-pantothenate: step 5/5. In terms of biological role, catalyzes the phosphorylation of the 3'-hydroxyl group of dephosphocoenzyme A to form coenzyme A. The chain is Dephospho-CoA kinase from Oceanobacillus iheyensis (strain DSM 14371 / CIP 107618 / JCM 11309 / KCTC 3954 / HTE831).